The following is a 152-amino-acid chain: MKTPIELKILDSRIGSEFPLPAYATPGSAGMDLRAMIDTTMTIAPGETQLIPTGIAIHVADPGLAAVILPRSGLGHKHGIVLGNLVGLIDSDYQGPLMVSCWNRSDTPFTLEIGDRLAQLVFVPVVQAQFKLVDEFDSSDRGEGGFGHSGTK.

Substrate is bound by residues Arg-71–Gly-73, Asn-84, Leu-88–Asp-90, and Met-98.

This sequence belongs to the dUTPase family. Requires Mg(2+) as cofactor.

It carries out the reaction dUTP + H2O = dUMP + diphosphate + H(+). It functions in the pathway pyrimidine metabolism; dUMP biosynthesis; dUMP from dCTP (dUTP route): step 2/2. Functionally, this enzyme is involved in nucleotide metabolism: it produces dUMP, the immediate precursor of thymidine nucleotides and it decreases the intracellular concentration of dUTP so that uracil cannot be incorporated into DNA. The polypeptide is Deoxyuridine 5'-triphosphate nucleotidohydrolase (Shewanella sp. (strain ANA-3)).